A 506-amino-acid chain; its full sequence is Anaerobic nitric oxide reductase transcription regulator NorR (506 aa).

4-aspartylphosphate is present on D57. In terms of domain architecture, Sigma-54 factor interaction spans 187 to 416; the sequence is MIGLSPAMTQ…LEHAIHRAVV (230 aa). ATP contacts are provided by residues 215–222 and 278–287; these read GETGTGKE and ADNGTLFLDE. A DNA-binding region (H-T-H motif) is located at residues 481-500; sequence WAASARALETDVANLHRLAK.

The protein operates within nitrogen metabolism; nitric oxide reduction. In terms of biological role, required for the expression of anaerobic nitric oxide (NO) reductase, acts as a transcriptional activator for at least the norVW operon. Activation also requires sigma-54. The chain is Anaerobic nitric oxide reductase transcription regulator NorR from Salmonella choleraesuis (strain SC-B67).